Reading from the N-terminus, the 488-residue chain is Ammonium transporter Rh type C-like 2 (488 aa).

Residues 1–21 (MGNCFGSRGICDRPKNTNIRL) are Cytoplasmic-facing. A helical membrane pass occupies residues 22-42 (SLPAVCFVWQVSMIILFGVFV). Residues 43–73 (RYNEEADTNWVYTKKEKNITSDIENDFYFRY) lie on the Extracellular side of the membrane. Asn-60 carries N-linked (GlcNAc...) asparagine glycosylation. A helical membrane pass occupies residues 74 to 94 (PSFQDVHVMIFVGFGFLMTFL). The Cytoplasmic portion of the chain corresponds to 95–98 (KRYS). The chain crosses the membrane as a helical span at residues 99–119 (FGAVGFNFLIAAFGLQWALLM). Over 120-139 (QGWFSPLGDDGKIKIGIENL) the chain is Extracellular. A helical transmembrane segment spans residues 140–160 (INADFCVASCLIAYGAVLGKV). The Cytoplasmic segment spans residues 161-162 (SP). The chain crosses the membrane as a helical span at residues 163-183 (VQLLVMTLFGITLYAVEEFII). At 184 to 191 (LRVLNAKD) the chain is on the extracellular side. Residues 192 to 214 (AGGSMVIHTFGAYYGLSISRVLY) traverse the membrane as a helical segment. Residues 215–232 (RPNLNKSKHMNGSVYHSD) lie on the Cytoplasmic side of the membrane. Residues 233–253 (VFAMIGTLFLWMFWPSFNSAI) traverse the membrane as a helical segment. The Extracellular portion of the chain corresponds to 254–264 (CNHGDGQHRAA). Residues 265-285 (INTYLALASTVLTTVAISSMF) form a helical membrane-spanning segment. At 286–298 (EKTGKLDMVHIQN) the chain is on the cytoplasmic side. A helical transmembrane segment spans residues 299–319 (STLAGGVAVGTAAEFMLMPYG). A topological domain (extracellular) is located at residue Ser-320. A helical transmembrane segment spans residues 321–341 (LIVGFFCGIISTLGYIYLTPF). Residues 342–356 (LEERLKIQDTCGIHN) lie on the Cytoplasmic side of the membrane. The helical transmembrane segment at 357-377 (LHAMPGVIGGIVGAISAAAAS) threads the bilayer. The Extracellular segment spans residues 378–409 (KEVYGDLGLKNIFSIEGSNVTRLPTVQGGYQA). A helical transmembrane segment spans residues 410–430 (AALCVALCFGIGGGTFVGLVL). Residues 431–488 (KLPIWGDPADEHCFNDEMYWEVPEDEESIIPPVLSYNNHMIPNNKHEEMRETNFAEQS) are Cytoplasmic-facing.

The protein belongs to the ammonium transporter (TC 2.A.49) family. Rh subfamily. As to quaternary structure, homotrimer. As to expression, at larval stages, expressed only in the yolk sac and gill. However, the kidney and the gills are major sites of expression in adults.

It is found in the apical cell membrane. In terms of biological role, functions as an ammonia transporter. May play a role in the elimination of ammonia in the gill. The protein is Ammonium transporter Rh type C-like 2 (rhcgl2) of Danio rerio (Zebrafish).